We begin with the raw amino-acid sequence, 64 residues long: Large ribosomal subunit protein bL35c (64 aa).

The protein belongs to the bacterial ribosomal protein bL35 family.

The protein localises to the plastid. Its subcellular location is the chloroplast. This chain is Large ribosomal subunit protein bL35c, found in Phaeodactylum tricornutum (strain CCAP 1055/1).